The chain runs to 195 residues: Nuclear transcription factor Y subunit C-10 (195 aa).

The interval 1 to 24 (MRRPKSSHVRMEPVAPRSHNTMPM) is disordered.

This sequence belongs to the NFYC/HAP5 subunit family. Heterotrimeric transcription factor composed of three components, NF-YA, NF-YB and NF-YC. NF-YB and NF-YC must interact and dimerize for NF-YA association and DNA binding.

Its subcellular location is the nucleus. Stimulates the transcription of various genes by recognizing and binding to a CCAAT motif in promoters. This is Nuclear transcription factor Y subunit C-10 (NFYC10) from Arabidopsis thaliana (Mouse-ear cress).